The sequence spans 478 residues: Zinc finger protein 410 (478 aa).

Disordered stretches follow at residues 84–113 and 187–214; these read PDGE…LQDL and NAKT…PLPQ. Over residues 103–113 the composition is skewed to polar residues; it reads TPESPSLLQDL. 5 consecutive C2H2-type zinc fingers follow at residues 219-243, 249-273, 279-303, 309-333, and 339-362; these read LKCT…LKTH, FICP…MRTH, FMCH…RRIH, FLCE…LVVH, and HQCQ…RKHH. Residues cysteine 221, cysteine 226, histidine 239, histidine 243, cysteine 251, cysteine 256, histidine 269, histidine 273, cysteine 281, cysteine 286, histidine 299, histidine 303, cysteine 311, cysteine 316, histidine 329, histidine 333, cysteine 341, cysteine 344, histidine 357, and histidine 361 each coordinate Zn(2+).

As to quaternary structure, interacts with CDKN2A/p14ARF. O-glycosylated. O-GlcNAcylation may occur in response to increasing glucose levels and affect transcription factor activity. Post-translationally, sumoylated. Sumoylation increases its half-life, possibly by blocking ubiquitin-mediated degradation.

It is found in the nucleus. The protein resides in the chromosome. Transcription factor that binds to the sequence motif 5'-CATCCCATAATA-3', and is specifically required to silence expression of fetal hemoglobin in adult erythroid cells. Prevents expression of fetal hemoglobin genes HBG1 and HBG2 through CHD4: acts as a direct transcriptional activator of CHD4, a central component of the NuRD complex that represses transcription of fetal hemoglobin genes HBG1 and HBG2 in erythroid cells. May also activate transcription of matrix-remodeling genes such as MMP1 during fibroblast senescence. May activate transcription of the gap junction gene GJC1, perhaps in response to increasing glucose. However, recent studies suggest that ZNF410 is dedicated to regulate expression of a single gene: CHD4. The chain is Zinc finger protein 410 from Mus musculus (Mouse).